A 122-amino-acid polypeptide reads, in one-letter code: Basic phospholipase A2 vipoxin B chain (122 aa).

Disulfide bonds link C26–C115, C28–C44, C43–C95, C49–C122, C50–C88, C57–C81, and C75–C86. Residues Y27, G29, and G31 each coordinate Ca(2+). Residue H47 is part of the active site. D48 serves as a coordination point for Ca(2+). D89 is an active-site residue.

The protein belongs to the phospholipase A2 family. Group II subfamily. D49 sub-subfamily. As to quaternary structure, heterodimer of A (AC P04084) and B chains; non-covalently linked. The A chain (acidic) is non-toxic, and increases the toxicity of the B chain (basic). The A chain may act as factor stabilizing the complex structure and hence retaining its toxicity by preventing non-specific binding. Upon binding to the target membranes the A chain is postulated to dissociate. Requires Ca(2+) as cofactor. As to expression, expressed by the venom gland.

The protein resides in the secreted. The enzyme catalyses a 1,2-diacyl-sn-glycero-3-phosphocholine + H2O = a 1-acyl-sn-glycero-3-phosphocholine + a fatty acid + H(+). Its function is as follows. Heterodimer: postsynaptic neurotoxin. In terms of biological role, monomer: snake venom phospholipase A2 (PLA2) that shows hemolytic activity and inhibition of platelet aggregation. The hemolytic activity occurs only in presence of fatty acids (unsaturated fatty acids facilitate induce a strong hemolytic activity, whereas saturated fatty acids induce a slight activity). The inhibition of platelet aggregation is almost maximal when aggregation is induced by collagen, and arachidonic acid, whereas it is only of 30% when the aggregation is induced by ADP. PLA2 catalyzes the calcium-dependent hydrolysis of the 2-acyl groups in 3-sn-phosphoglycerides. This is Basic phospholipase A2 vipoxin B chain from Vipera ammodytes meridionalis (Eastern sand viper).